The following is a 309-amino-acid chain: Malate dehydrogenase (309 aa).

NAD(+) is bound by residues glycine 6–glycine 11 and aspartate 31. Positions 80 and 86 each coordinate substrate. Residues asparagine 93 and threonine 116–asparagine 118 contribute to the NAD(+) site. Residues asparagine 118 and arginine 149 each contribute to the substrate site. Residue histidine 173 is the Proton acceptor of the active site.

The protein belongs to the LDH/MDH superfamily. As to quaternary structure, homotetramer.

The catalysed reaction is (S)-malate + NAD(+) = oxaloacetate + NADH + H(+). Catalyzes the reversible oxidation of malate to oxaloacetate. Exhibits higher specific activity for oxaloacetate reduction than for malate oxidation in vitro. Has a strong preference for NAD. Can use NADPH for oxaloacetate reduction, but activity decreases more than 90%. No activity detected with NADP(+) and malate. This is Malate dehydrogenase from Pyrobaculum islandicum (strain DSM 4184 / JCM 9189 / GEO3).